We begin with the raw amino-acid sequence, 250 residues long: 3-deoxy-manno-octulosonate cytidylyltransferase (250 aa).

This sequence belongs to the KdsB family.

Its subcellular location is the cytoplasm. It catalyses the reaction 3-deoxy-alpha-D-manno-oct-2-ulosonate + CTP = CMP-3-deoxy-beta-D-manno-octulosonate + diphosphate. It functions in the pathway nucleotide-sugar biosynthesis; CMP-3-deoxy-D-manno-octulosonate biosynthesis; CMP-3-deoxy-D-manno-octulosonate from 3-deoxy-D-manno-octulosonate and CTP: step 1/1. Its pathway is bacterial outer membrane biogenesis; lipopolysaccharide biosynthesis. Its function is as follows. Activates KDO (a required 8-carbon sugar) for incorporation into bacterial lipopolysaccharide in Gram-negative bacteria. This chain is 3-deoxy-manno-octulosonate cytidylyltransferase, found in Legionella pneumophila (strain Paris).